Consider the following 505-residue polypeptide: AMP phosphorylase (505 aa).

Residues G170, 196-201 (SRAITS), and T205 each bind AMP. Residue D258 is the Proton donor of the active site. Residues S266 and K290 each contribute to the AMP site.

Belongs to the thymidine/pyrimidine-nucleoside phosphorylase family. Type 2 subfamily.

The catalysed reaction is AMP + phosphate = alpha-D-ribose 1,5-bisphosphate + adenine. It catalyses the reaction CMP + phosphate = cytosine + alpha-D-ribose 1,5-bisphosphate. The enzyme catalyses UMP + phosphate = alpha-D-ribose 1,5-bisphosphate + uracil. Functionally, catalyzes the conversion of AMP and phosphate to adenine and ribose 1,5-bisphosphate (R15P). Exhibits phosphorylase activity toward CMP and UMP in addition to AMP. Functions in an archaeal AMP degradation pathway, together with R15P isomerase and RubisCO. This Methanococcus maripaludis (strain C5 / ATCC BAA-1333) protein is AMP phosphorylase.